The following is a 309-amino-acid chain: MPPNNSKYVLDPVSIKSVCGGEESYIRCVEYGKKKAHYSNLNLLAKAILAGMFVGLCAHASGIAGGLFYYHKLREIVGASMSVFVYGFTFPIAFMCIICTGSDLFTGNTLAVTMALYEKKVKLLDYLRVMTISLFGNYVGAVSFAFFVSYLSGAFTNVHAVEKNHFFQFLNDIAEKKVHHTFVECVSLAVGCNIFVCLAVYFVLTLKDGAGYVFSVFFAVYAFAIAGYEHIIANIYTLNIALMVNTKITVYQAYIKNLLPTLLGNYIAGAIVLGLPLYFIYKEHYYNFERSKRDNNDAQMKSLSIELRN.

Topologically, residues 1–19 (MPPNNSKYVLDPVSIKSVC) are cytoplasmic. Positions 20-35 (GGEESYIRCVEYGKKK) form an intramembrane region, helical. At 36-40 (AHYSN) the chain is on the cytoplasmic side. The helical transmembrane segment at 41 to 68 (LNLLAKAILAGMFVGLCAHASGIAGGLF) threads the bilayer. Topologically, residues 69-79 (YYHKLREIVGA) are extracellular. Residues 80–100 (SMSVFVYGFTFPIAFMCIICT) form a helical membrane-spanning segment. Over 101–122 (GSDLFTGNTLAVTMALYEKKVK) the chain is Cytoplasmic. Residues 123 to 150 (LLDYLRVMTISLFGNYVGAVSFAFFVSY) traverse the membrane as a helical segment. Over 151-163 (LSGAFTNVHAVEK) the chain is Extracellular. The segment at residues 164–179 (NHFFQFLNDIAEKKVH) is an intramembrane region (helical). Residues 180–181 (HT) lie on the Extracellular side of the membrane. Residues 182-206 (FVECVSLAVGCNIFVCLAVYFVLTL) traverse the membrane as a helical segment. Topologically, residues 207-209 (KDG) are cytoplasmic. A helical transmembrane segment spans residues 210–226 (AGYVFSVFFAVYAFAIA). Topologically, residues 227 to 249 (GYEHIIANIYTLNIALMVNTKIT) are extracellular. The chain crosses the membrane as a helical span at residues 250 to 280 (VYQAYIKNLLPTLLGNYIAGAIVLGLPLYFI). Over 281 to 309 (YKEHYYNFERSKRDNNDAQMKSLSIELRN) the chain is Cytoplasmic.

Belongs to the FNT transporter (TC 1.A.16) family. As to quaternary structure, homopentamer.

It localises to the cell membrane. The protein localises to the vacuole membrane. It carries out the reaction (S)-lactate(in) + H(+)(in) = (S)-lactate(out) + H(+)(out). The enzyme catalyses formate(in) + H(+)(in) = formate(out) + H(+)(out). It catalyses the reaction pyruvate(out) + H(+)(out) = pyruvate(in) + H(+)(in). The catalysed reaction is acetate(out) + H(+)(out) = acetate(in) + H(+)(in). With respect to regulation, inhibited by diethylpyrocarbonate (DEPC). Protonophores, such as 2,4-dinitrophenol and carbonylcyanide-3-chlorophenylhydrazone, abolish transport. Inhibited by phloretin, furosemide, alpha-cyano-4-hydroxy-cinnamate and alpha-fluorocinnamate. Inhibited by the Malaria Box compound MMV007839 and its derivatives BH296 and BH267.meta. Inhibited by the Malaria Box compound MMV000972. Inhibited by broad-specificity anion transport inhibitor NPPB. Monocarboxylate-proton symporter that mediates the efflux of the waste product lactate in the intraerythrocytic parasites; active in acidic-to-neutral pH range. Transports L-lactate. Transports D-lactate, pyruvate, acetate and formate. Essential for asexual growth but dispensable for the development of gametocytes. This chain is Formate-nitrite transporter, found in Plasmodium falciparum (isolate 3D7).